The following is a 292-amino-acid chain: 4-hydroxy-tetrahydrodipicolinate synthase (292 aa).

Threonine 45 serves as a coordination point for pyruvate. Catalysis depends on tyrosine 133, which acts as the Proton donor/acceptor. The active-site Schiff-base intermediate with substrate is lysine 161. Isoleucine 203 is a pyruvate binding site.

Belongs to the DapA family. In terms of assembly, homodimer.

Its subcellular location is the cytoplasm. The enzyme catalyses L-aspartate 4-semialdehyde + pyruvate = (2S,4S)-4-hydroxy-2,3,4,5-tetrahydrodipicolinate + H2O + H(+). Its pathway is amino-acid biosynthesis; L-lysine biosynthesis via DAP pathway; (S)-tetrahydrodipicolinate from L-aspartate: step 3/4. In terms of biological role, catalyzes the condensation of (S)-aspartate-beta-semialdehyde [(S)-ASA] and pyruvate to 4-hydroxy-tetrahydrodipicolinate (HTPA). This is 4-hydroxy-tetrahydrodipicolinate synthase from Ectopseudomonas mendocina (strain ymp) (Pseudomonas mendocina).